The chain runs to 443 residues: Glutamate-1-semialdehyde 2,1-aminomutase (443 aa).

The residue at position 281 (Lys-281) is an N6-(pyridoxal phosphate)lysine.

The protein belongs to the class-III pyridoxal-phosphate-dependent aminotransferase family. HemL subfamily. In terms of assembly, homodimer. Requires pyridoxal 5'-phosphate as cofactor.

The protein resides in the cytoplasm. It catalyses the reaction (S)-4-amino-5-oxopentanoate = 5-aminolevulinate. Its pathway is porphyrin-containing compound metabolism; protoporphyrin-IX biosynthesis; 5-aminolevulinate from L-glutamyl-tRNA(Glu): step 2/2. The polypeptide is Glutamate-1-semialdehyde 2,1-aminomutase (Leptospira interrogans serogroup Icterohaemorrhagiae serovar Lai (strain 56601)).